The chain runs to 335 residues: HTH-type transcriptional regulator MalR (335 aa).

The HTH lacI-type domain occupies 1–55; the sequence is MNIKDIARLSGVGVSTVSRVINNHPDVKQSTREKVLQIIKDSNYIPNNSARILKQ. A DNA-binding region (H-T-H motif) is located at residues 3–22; it reads IKDIARLSGVGVSTVSRVIN.

In terms of biological role, repressor of glucanotransferase gene expression. In Clostridium butyricum, this protein is HTH-type transcriptional regulator MalR.